The following is a 318-amino-acid chain: HPr kinase/phosphorylase (318 aa).

Active-site residues include His141 and Lys162. An ATP-binding site is contributed by 156–163 (GDSAMGKS). A Mg(2+)-binding site is contributed by Ser163. Asp180 acts as the Proton acceptor; for phosphorylation activity. Proton donor; for dephosphorylation activity in catalysis. Residues 204–213 (LEVRGLGILN) are important for the catalytic mechanism of both phosphorylation and dephosphorylation. Mg(2+) is bound at residue Glu205. Arg248 is a catalytic residue. The important for the catalytic mechanism of dephosphorylation stretch occupies residues 269 to 274 (PVAAGR).

This sequence belongs to the HPrK/P family. Homohexamer. It depends on Mg(2+) as a cofactor.

The enzyme catalyses [HPr protein]-L-serine + ATP = [HPr protein]-O-phospho-L-serine + ADP + H(+). It carries out the reaction [HPr protein]-O-phospho-L-serine + phosphate + H(+) = [HPr protein]-L-serine + diphosphate. Functionally, catalyzes the ATP- as well as the pyrophosphate-dependent phosphorylation of a specific serine residue in HPr, a phosphocarrier protein of the phosphoenolpyruvate-dependent sugar phosphotransferase system (PTS). HprK/P also catalyzes the pyrophosphate-producing, inorganic phosphate-dependent dephosphorylation (phosphorolysis) of seryl-phosphorylated HPr (P-Ser-HPr). The sequence is that of HPr kinase/phosphorylase from Chromobacterium violaceum (strain ATCC 12472 / DSM 30191 / JCM 1249 / CCUG 213 / NBRC 12614 / NCIMB 9131 / NCTC 9757 / MK).